We begin with the raw amino-acid sequence, 105 residues long: uncharacterized protein (105 aa).

The protein resides in the cytoplasm. Its subcellular location is the nucleus. This is an uncharacterized protein from Schizosaccharomyces pombe (strain 972 / ATCC 24843) (Fission yeast).